Reading from the N-terminus, the 1376-residue chain is YLP motif-containing protein 1 (1376 aa).

Disordered regions lie at residues 1–335 (MYPN…PEED) and 511–1058 (STIP…PPGR). Positions 14 to 27 (YPPPPVPPPPPPVA) are enriched in pro residues. Low complexity-rich tracts occupy residues 31 to 50 (ASPGPGYSSSTAPAAPSSSG) and 59 to 80 (LAQLQQLQQMHQKQMQCVLQPH). 5 stretches are compositionally biased toward pro residues: residues 81–93 (HLPPPPLPPPPVM), 102–114 (QPPPPPMPPPPGP), 148–158 (PESPPVPPGSY), 166–176 (MPPPQPPPSYY), and 184–204 (YLPPAQPSPSKPQLPPPPPSI). 2 stretches are compositionally biased toward polar residues: residues 207–216 (GNKTTIQQEP) and 238–260 (STMTPQEQQQYWYRQHLLSLQQR). The segment covering 261-271 (TKVHLPGHKKG) has biased composition (basic residues). The segment covering 277 to 286 (DVPEPIKEEA) has biased composition (basic and acidic residues). Pro residues-rich tracts occupy residues 303–320 (PPLPPPNEEMPPPLPPEE), 511–537 (STIPPPGMPPPVMPPSLPTSVPPPGMP), 545–594 (LPPP…PQGM), and 632–641 (PPSPYHPPPQ). A compositionally biased stretch (polar residues) spans 642-671 (SEQGNSKPLNKVFSSEQGLGESSSALSQSV). Lys675 is subject to N6-methyllysine. A compositionally biased stretch (basic and acidic residues) spans 698 to 714 (RGPREQKEQLQKLKDFG). Pro residues-rich tracts occupy residues 738 to 753 (MYPPPGSYRPPPPMGK), 773 to 796 (TRPPVPIPPPPPPPPPPPPPPPVI), and 840 to 870 (PVLPPPPVHPSIPPPGPMPMGMPPMSKPPPV). Lys886 participates in a covalent cross-link: Glycyl lysine isopeptide (Lys-Gly) (interchain with G-Cter in SUMO2). Composition is skewed to basic and acidic residues over residues 896–930 (ITLRPDPLPERSAFDADHAGQRDRYDRDRDREPYF), 937–1004 (TDHR…DRPP), 1013–1023 (GERRTYPEERM), and 1039–1058 (RVEKKPESKNVDDILKPPGR). Residue Lys943 forms a Glycyl lysine isopeptide (Lys-Gly) (interchain with G-Cter in SUMO2) linkage. The involved in interaction with PPP1CA stretch occupies residues 1326–1333 (KKRVRWAD).

As to quaternary structure, interacts with PPP1CA and NCOA5. Forms a complex with ILF2, ILF3, KHDRBS1, RBMX, NCOA5 and PPP1CA. High level expression seen in the brain, adipose tissue, heart and kidney, with a low level expression in muscle, spleen and lung (at protein level).

The protein localises to the nucleus. It localises to the nucleus speckle. Plays a role in the reduction of telomerase activity during differentiation of embryonic stem cells by binding to the core promoter of TERT and controlling its down-regulation. The protein is YLP motif-containing protein 1 (Ylpm1) of Rattus norvegicus (Rat).